Reading from the N-terminus, the 216-residue chain is Imidazole glycerol phosphate synthase subunit HisH (216 aa).

Positions 2 to 216 (SVAIVDYGSG…LISNFLKWKP (215 aa)) constitute a Glutamine amidotransferase type-1 domain. The active-site Nucleophile is the Cys-88. Catalysis depends on residues His-196 and Glu-198.

Heterodimer of HisH and HisF.

Its subcellular location is the cytoplasm. The catalysed reaction is 5-[(5-phospho-1-deoxy-D-ribulos-1-ylimino)methylamino]-1-(5-phospho-beta-D-ribosyl)imidazole-4-carboxamide + L-glutamine = D-erythro-1-(imidazol-4-yl)glycerol 3-phosphate + 5-amino-1-(5-phospho-beta-D-ribosyl)imidazole-4-carboxamide + L-glutamate + H(+). The enzyme catalyses L-glutamine + H2O = L-glutamate + NH4(+). It participates in amino-acid biosynthesis; L-histidine biosynthesis; L-histidine from 5-phospho-alpha-D-ribose 1-diphosphate: step 5/9. In terms of biological role, IGPS catalyzes the conversion of PRFAR and glutamine to IGP, AICAR and glutamate. The HisH subunit catalyzes the hydrolysis of glutamine to glutamate and ammonia as part of the synthesis of IGP and AICAR. The resulting ammonia molecule is channeled to the active site of HisF. The protein is Imidazole glycerol phosphate synthase subunit HisH of Rhodopseudomonas palustris (strain ATCC BAA-98 / CGA009).